Reading from the N-terminus, the 551-residue chain is Chitinase (551 aa).

A signal peptide spans 1-17 (MLYKLLNVLWLVAVSNA). Positions 1-149 (MLYKLLNVLW…NKPGRREDKI (149 aa)) are chitin binding domain (CBD). Residues 148–548 (KIVAAYFVEW…NAINAQFKPK (401 aa)) form the GH18 domain. N173 carries an N-linked (GlcNAc...) asparagine; by host glycan. Residue E305 is the Proton donor of the active site. N444 carries an N-linked (GlcNAc...) asparagine; by host glycan. Positions 548 to 551 (KDEL) match the Prevents secretion from ER motif.

Belongs to the glycosyl hydrolase 18 family. Chitinase class II subfamily. In terms of assembly, interacts with host VCATH.

It is found in the host endoplasmic reticulum lumen. It carries out the reaction Random endo-hydrolysis of N-acetyl-beta-D-glucosaminide (1-&gt;4)-beta-linkages in chitin and chitodextrins.. Its function is as follows. Plays a role in host liquefaction to facilitate horizontal transmission of the virus by hydrolyzing beta-chitin and by regulating the cysteine protease VCATH. Localized in the host reticulum endoplasmic via its KDEL motif, interacts with and thus prevents VCATH secretion before host cell lysis occurs. In Lepidoptera (butterflies and moths), this protein is Chitinase (CHIA).